The following is a 1077-amino-acid chain: ATP-dependent helicase/deoxyribonuclease subunit B (1077 aa).

This sequence belongs to the helicase family. AddB/RexB type 2 subfamily. In terms of assembly, heterodimer of AddA and RexB. It depends on Mg(2+) as a cofactor.

Functionally, the heterodimer acts as both an ATP-dependent DNA helicase and an ATP-dependent, dual-direction single-stranded exonuclease. Recognizes the chi site generating a DNA molecule suitable for the initiation of homologous recombination. This subunit has 5' -&gt; 3' nuclease activity but not helicase activity. The chain is ATP-dependent helicase/deoxyribonuclease subunit B from Streptococcus agalactiae serotype Ia (strain ATCC 27591 / A909 / CDC SS700).